A 493-amino-acid chain; its full sequence is Lysine--tRNA ligase (493 aa).

Mg(2+) contacts are provided by glutamate 402 and glutamate 409.

This sequence belongs to the class-II aminoacyl-tRNA synthetase family. As to quaternary structure, homodimer. The cofactor is Mg(2+).

The protein localises to the cytoplasm. It catalyses the reaction tRNA(Lys) + L-lysine + ATP = L-lysyl-tRNA(Lys) + AMP + diphosphate. The chain is Lysine--tRNA ligase from Ureaplasma urealyticum serovar 10 (strain ATCC 33699 / Western).